Consider the following 181-residue polypeptide: Endoribonuclease YbeY (181 aa).

Histidine 115, histidine 119, and histidine 125 together coordinate Zn(2+).

It belongs to the endoribonuclease YbeY family. It depends on Zn(2+) as a cofactor.

It is found in the cytoplasm. Its function is as follows. Single strand-specific metallo-endoribonuclease involved in late-stage 70S ribosome quality control and in maturation of the 3' terminus of the 16S rRNA. The polypeptide is Endoribonuclease YbeY (Bifidobacterium animalis subsp. lactis (strain AD011)).